The primary structure comprises 289 residues: Bifunctional aminodeoxychorismate lyase / D-amino acid transaminase (289 aa).

A pyridoxal 5'-phosphate-binding site is contributed by arginine 50. Lysine 149 is modified (N6-(pyridoxal phosphate)lysine). Residues tyrosine 153, threonine 216, and threonine 217 each coordinate pyridoxal 5'-phosphate. Residue serine 252 participates in 2-oxoglutarate binding. Serine 253 contributes to the pyridoxal 5'-phosphate binding site. Residues methionine 254 and threonine 255 each coordinate 2-oxoglutarate.

This sequence belongs to the class-IV pyridoxal-phosphate-dependent aminotransferase family. As to quaternary structure, homodimer. Pyridoxal 5'-phosphate is required as a cofactor.

The enzyme catalyses 4-amino-4-deoxychorismate = 4-aminobenzoate + pyruvate + H(+). It catalyses the reaction D-alanine + 2-oxoglutarate = D-glutamate + pyruvate. It participates in cofactor biosynthesis; tetrahydrofolate biosynthesis; 4-aminobenzoate from chorismate: step 2/2. The protein operates within cell wall biogenesis; peptidoglycan biosynthesis. In terms of biological role, bifunctional enzyme that catalyzes two enzymatic reactions in biochemically unrelated pathways: acts as an aminodeoxychorismate (ADC) lyase (ADCL) in folate biosynthesis, converting 4-amino-4-deoxychorismate (ADC) to 4-aminobenzoate (PABA), and as a D-amino acid transaminase (DAAT) in peptidoglycan (PG) biosynthesis. DAAT activity is strictly restricted to D-alanine and D-glutamate. May function as a metabolic toggle that alternates between ADCL and DAAT activity, prioritizing the former over the latter in response to substrate accumulation. Bifunctionality of this enzyme provides a failsafe mechanism for a metabolic coupling between nucleic acid and cell wall biosynthesis that appears to ensure prioritization of PABA production over D-alanine/D-glutamate biosynthesis. This chain is Bifunctional aminodeoxychorismate lyase / D-amino acid transaminase, found in Mycobacterium tuberculosis (strain ATCC 25618 / H37Rv).